The primary structure comprises 491 residues: Cobyric acid synthase (491 aa).

The GATase cobBQ-type domain maps to P249–F439. C329 serves as the catalytic Nucleophile. The active site involves H431.

It belongs to the CobB/CobQ family. CobQ subfamily.

It functions in the pathway cofactor biosynthesis; adenosylcobalamin biosynthesis. Its function is as follows. Catalyzes amidations at positions B, D, E, and G on adenosylcobyrinic A,C-diamide. NH(2) groups are provided by glutamine, and one molecule of ATP is hydrogenolyzed for each amidation. In Clostridium tetani (strain Massachusetts / E88), this protein is Cobyric acid synthase.